Here is a 549-residue protein sequence, read N- to C-terminus: Hydroxylamine reductase (549 aa).

4 residues coordinate [4Fe-4S] cluster: cysteine 5, cysteine 8, cysteine 17, and cysteine 23. Residues histidine 244, glutamate 268, cysteine 312, cysteine 403, cysteine 431, cysteine 456, glutamate 491, and lysine 493 each contribute to the hybrid [4Fe-2O-2S] cluster site. Cysteine 403 carries the cysteine persulfide modification.

It belongs to the HCP family. The cofactor is [4Fe-4S] cluster. Hybrid [4Fe-2O-2S] cluster is required as a cofactor.

It is found in the cytoplasm. The enzyme catalyses A + NH4(+) + H2O = hydroxylamine + AH2 + H(+). Catalyzes the reduction of hydroxylamine to form NH(3) and H(2)O. The chain is Hydroxylamine reductase from Caldanaerobacter subterraneus subsp. tengcongensis (strain DSM 15242 / JCM 11007 / NBRC 100824 / MB4) (Thermoanaerobacter tengcongensis).